Consider the following 108-residue polypeptide: ATP synthase peripheral stalk subunit F6, mitochondrial (108 aa).

The transit peptide at 1 to 32 directs the protein to the mitochondrion; sequence MVLQRIFRLSSVLRSAVSVHLKRNIGVTAVAF. 3 positions are modified to N6-acetyllysine: K41, K46, and K79. K84, K94, and K99 each carry N6-acetyllysine; alternate. 3 positions are modified to N6-succinyllysine; alternate: K84, K94, and K99. An N6-acetyllysine modification is found at K105. Position 108 is a phosphoserine (S108).

The protein belongs to the eukaryotic ATPase subunit F6 family. In terms of assembly, component of the ATP synthase complex composed at least of ATP5F1A/subunit alpha, ATP5F1B/subunit beta, ATP5MC1/subunit c (homooctomer), MT-ATP6/subunit a, MT-ATP8/subunit 8, ATP5ME/subunit e, ATP5MF/subunit f, ATP5MG/subunit g, ATP5MK/subunit k, ATP5MJ/subunit j, ATP5F1C/subunit gamma, ATP5F1D/subunit delta, ATP5F1E/subunit epsilon, ATP5PF/subunit F6, ATP5PB/subunit b, ATP5PD/subunit d, ATP5PO/subunit OSCP. ATP synthase complex consists of a soluble F(1) head domain (subunits alpha(3) and beta(3)) - the catalytic core - and a membrane F(0) domain - the membrane proton channel (subunits c, a, 8, e, f, g, k and j). These two domains are linked by a central stalk (subunits gamma, delta, and epsilon) rotating inside the F1 region and a stationary peripheral stalk (subunits F6, b, d, and OSCP).

It localises to the mitochondrion. It is found in the mitochondrion inner membrane. Its function is as follows. Subunit F6, of the mitochondrial membrane ATP synthase complex (F(1)F(0) ATP synthase or Complex V) that produces ATP from ADP in the presence of a proton gradient across the membrane which is generated by electron transport complexes of the respiratory chain. ATP synthase complex consist of a soluble F(1) head domain - the catalytic core - and a membrane F(1) domain - the membrane proton channel. These two domains are linked by a central stalk rotating inside the F(1) region and a stationary peripheral stalk. During catalysis, ATP synthesis in the catalytic domain of F(1) is coupled via a rotary mechanism of the central stalk subunits to proton translocation. In vivo, can only synthesize ATP although its ATP hydrolase activity can be activated artificially in vitro. Part of the complex F(0) domain. Part of the complex F(0) domain and the peripheric stalk, which acts as a stator to hold the catalytic alpha(3)beta(3) subcomplex and subunit a/ATP6 static relative to the rotary elements. This Mus musculus (Mouse) protein is ATP synthase peripheral stalk subunit F6, mitochondrial.